An 805-amino-acid chain; its full sequence is MGKKQLVLVGNGMAGVRAIEEILSVAKDEFQITIFGAEPHPNYNRILLSKVLQGDTDIKDITLNDWDWYEENNIQLYTNETVIKVDTENKTVITDADRIQPYDELILATGSVPFILPIPGADKKGVTAFRDIKDTDTMLAASKQYKKAAVIGGGLLGLEAARGLLNLGMDVSVIHLAPFLMERQLDATAGRLLQNELEKQGMTFLLEKQTEEIVGDDRVEGLRFKDGTSIEADLVVMAVGIRPNTTLGAESGIPVNRGIIVNDYMQTEIPHIYAVGECAEHRGIAYGLVAPLYEQAKVLAKHMCGIETKPYEGSVLSTQLKVSGVEVFSAGDFNESEEKKAIKVFDEQDGIYKKIVLRGNQIVGAVLFGDSSEGNRLFSMIQKEADISETSKISILQPLSQEAGTSITAAMSDDEIICGCNGVSKGAIIQAIQEKGCSSTDEIKACTGASRSCGGCKPLVEEILQHTLGSDFDASAQKEAICGCTTLSRDEVVEEIKAKGLSHTREVMNVLGWKTPEGCSKCRPALNYYLGMINPTKYEDDRTSRFVNERMHANIQKDGTYSVVPRMYGGVTNSTDLRKIADVVDKYEIPLVKMTGGQRIDLIGVKKEDLPKVWEDLDMPSGYAYGKTLRTVKTCVGEQFCRFGTQDSMALGIALEKKFEGLNTPHKVKMAVSACPRNCAESGIKDLGVVGIDGGWELYVGGNGGTHLRAGDLLMKVKTNEEVLEYAGAYLQYYRETANYLERTSAWLERVGLSHVQSVLNDPEKRQELNGRMNETLSVHKDPWKDFLEDKQTSKELFENVVTTS.

43-79 (YNRILLSKVLQGDTDIKDITLNDWDWYEENNIQLYTN) serves as a coordination point for FAD. 193 to 223 (LQNELEKQGMTFLLEKQTEEIVGDDRVEGLR) lines the NADP(+) pocket. Residues Cys418, Cys420, Cys453, and Cys456 each contribute to the [2Fe-2S] cluster site. Residues Cys635, Cys641, Cys675, and Cys679 each coordinate [4Fe-4S] cluster. Position 679 (Cys679) interacts with siroheme.

The protein belongs to the nitrite and sulfite reductase 4Fe-4S domain family. In terms of assembly, homodimer. It depends on siroheme as a cofactor. [2Fe-2S] cluster serves as cofactor. Requires [4Fe-4S] cluster as cofactor. FAD is required as a cofactor.

It carries out the reaction NH4(+) + 3 NADP(+) + 2 H2O = nitrite + 3 NADPH + 5 H(+). It catalyses the reaction NH4(+) + 3 NAD(+) + 2 H2O = nitrite + 3 NADH + 5 H(+). Its pathway is nitrogen metabolism; nitrate reduction (assimilation). Functionally, required for nitrite assimilation. The sequence is that of Nitrite reductase [NAD(P)H] (nasD) from Bacillus subtilis (strain 168).